Here is a 367-residue protein sequence, read N- to C-terminus: Ribosomal RNA large subunit methyltransferase M (367 aa).

S-adenosyl-L-methionine is bound by residues serine 188, 221 to 224 (CPGG), aspartate 240, aspartate 260, and aspartate 277. Lysine 306 serves as the catalytic Proton acceptor.

The protein belongs to the class I-like SAM-binding methyltransferase superfamily. RNA methyltransferase RlmE family. RlmM subfamily. In terms of assembly, monomer.

It is found in the cytoplasm. It catalyses the reaction cytidine(2498) in 23S rRNA + S-adenosyl-L-methionine = 2'-O-methylcytidine(2498) in 23S rRNA + S-adenosyl-L-homocysteine + H(+). In terms of biological role, catalyzes the 2'-O-methylation at nucleotide C2498 in 23S rRNA. This is Ribosomal RNA large subunit methyltransferase M from Serratia proteamaculans (strain 568).